A 354-amino-acid polypeptide reads, in one-letter code: UDP-glucose 4-epimerase 1 (354 aa).

8–39 (TILVTGGAGYIGSHTVLQLLQLGFRVVVLDNL) contributes to the NAD(+) binding site. Serine 133 serves as a coordination point for substrate. The active-site Proton acceptor is the tyrosine 157.

Belongs to the NAD(P)-dependent epimerase/dehydratase family. NAD(+) serves as cofactor.

It carries out the reaction UDP-alpha-D-glucose = UDP-alpha-D-galactose. Its pathway is carbohydrate metabolism; galactose metabolism. Functionally, catalyzes the interconversion between UDP-glucose and UDP-galactose. This Oryza sativa subsp. japonica (Rice) protein is UDP-glucose 4-epimerase 1 (UGE-1).